Reading from the N-terminus, the 199-residue chain is Holliday junction branch migration complex subunit RuvA (199 aa).

The segment at 1 to 63 (MIGKLNGKID…EEHIHLYGFL (63 aa)) is domain I. Residues 64–141 (TLEEKNFFNL…TKIFSSSAII (78 aa)) form a domain II region. The tract at residues 141–145 (IKDSN) is flexible linker. The domain III stretch occupies residues 146–199 (ISSIAINEVMKALVNLGFTRFEAQNTVQGIITQNPKISIDELIKTALKNRNSSF).

The protein belongs to the RuvA family. As to quaternary structure, homotetramer. Forms an RuvA(8)-RuvB(12)-Holliday junction (HJ) complex. HJ DNA is sandwiched between 2 RuvA tetramers; dsDNA enters through RuvA and exits via RuvB. An RuvB hexamer assembles on each DNA strand where it exits the tetramer. Each RuvB hexamer is contacted by two RuvA subunits (via domain III) on 2 adjacent RuvB subunits; this complex drives branch migration. In the full resolvosome a probable DNA-RuvA(4)-RuvB(12)-RuvC(2) complex forms which resolves the HJ.

It localises to the cytoplasm. In terms of biological role, the RuvA-RuvB-RuvC complex processes Holliday junction (HJ) DNA during genetic recombination and DNA repair, while the RuvA-RuvB complex plays an important role in the rescue of blocked DNA replication forks via replication fork reversal (RFR). RuvA specifically binds to HJ cruciform DNA, conferring on it an open structure. The RuvB hexamer acts as an ATP-dependent pump, pulling dsDNA into and through the RuvAB complex. HJ branch migration allows RuvC to scan DNA until it finds its consensus sequence, where it cleaves and resolves the cruciform DNA. The chain is Holliday junction branch migration complex subunit RuvA from Rickettsia prowazekii (strain Madrid E).